The following is a 160-amino-acid chain: SsrA-binding protein (160 aa).

The segment at 131 to 160 (KKEYDKRDTERERDAGRELQRAVRNKGKED) is disordered.

The protein belongs to the SmpB family.

It is found in the cytoplasm. Required for rescue of stalled ribosomes mediated by trans-translation. Binds to transfer-messenger RNA (tmRNA), required for stable association of tmRNA with ribosomes. tmRNA and SmpB together mimic tRNA shape, replacing the anticodon stem-loop with SmpB. tmRNA is encoded by the ssrA gene; the 2 termini fold to resemble tRNA(Ala) and it encodes a 'tag peptide', a short internal open reading frame. During trans-translation Ala-aminoacylated tmRNA acts like a tRNA, entering the A-site of stalled ribosomes, displacing the stalled mRNA. The ribosome then switches to translate the ORF on the tmRNA; the nascent peptide is terminated with the 'tag peptide' encoded by the tmRNA and targeted for degradation. The ribosome is freed to recommence translation, which seems to be the essential function of trans-translation. The sequence is that of SsrA-binding protein from Pseudomonas fluorescens (strain Pf0-1).